Reading from the N-terminus, the 1059-residue chain is Potassium transporter TRK1 (1059 aa).

Residues 1-46 (MLYRVSGFYKRHTRNFTNIDYGYYIRNFIHHIASKIYPYAKVVLPN) are Cytoplasmic-facing. A helical transmembrane segment spans residues 47 to 67 (FRAAHYFYILTLVILGSILVY). The Extracellular segment spans residues 68–73 (PVKTCA). The stretch at 74 to 90 (YIDVLFFTAGASTQAGL) is an intramembrane region. Topologically, residues 91–99 (NTVNVNDLS) are extracellular. Residues 100–122 (LYQQIVLYLLATLATPIFIHGSL) traverse the membrane as a helical segment. Residues 123 to 625 (LFVRLYYFER…LGGIEYRAVK (503 aa)) lie on the Cytoplasmic side of the membrane. 3 disordered regions span residues 180 to 276 (REAE…IDPE), 304 to 350 (IGSP…EDED), and 404 to 574 (PWTS…SIEN). The segment covering 186–203 (SSSSPQSSSSQTSQPVST) has biased composition (low complexity). Residues 236-245 (EKIHFEEPQR) are compositionally biased toward basic and acidic residues. The segment covering 335–344 (PATNSVGTGN) has biased composition (polar residues). A compositionally biased stretch (low complexity) spans 412–423 (TLSNSSKKGSLS). 2 stretches are compositionally biased toward acidic residues: residues 428 to 449 (DTED…SDIS) and 469 to 490 (YEED…DDGE). Positions 524–536 (RSNTLDTPQQNTS) are enriched in polar residues. Residues 540–552 (KIRKKAPKRKTPR) show a composition bias toward basic residues. A compositionally biased stretch (polar residues) spans 556–566 (NASFNQHSNVS). A helical transmembrane segment spans residues 626-649 (LLIKIIVVYYVGFNIIPGVMLSIW). Residues 650 to 668 (IYCMPHYKNLMISSSISPA) are Extracellular-facing. The stretch at 669 to 685 (WWAFFTSQSSFNDLGLT) is an intramembrane region. The Extracellular portion of the chain corresponds to 686–696 (LTSNSMMSFNQ). Residues 697-713 (NAFVQILCSFLIVIGNT) form a helical membrane-spanning segment. Over 714-757 (GFPILLRFIIWVMFKTARPLSLYKESLGFLLDHPRRCFTLLFPS) the chain is Cytoplasmic. A helical transmembrane segment spans residues 758-781 (VPTWWLFFILVVLNGFDLVIFCIL). Over 782–796 (DLHDDTFKGVDMGYR) the chain is Extracellular. Residues 797 to 813 (VLNGLFQAFCTRTVGFS) lie within the membrane without spanning it. Topologically, residues 814-820 (VMDLSQL) are extracellular. A helical transmembrane segment spans residues 821–844 (HAATQVSYLIMMYISVLPIAISVR). At 845-877 (RTNVYEEQSLGVYAKENAEGVDESAPSNYVGSH) the chain is on the cytoplasmic side. The helical transmembrane segment at 878 to 899 (LRNQLSYDLWYICLGLFIICIA) threads the bilayer. The Extracellular portion of the chain corresponds to 900 to 912 (EGKRLKEQDLRFS). Residues 913–931 (IFAVLFEIVSAYGTVGMSM) lie within the membrane without spanning it. Over 932–945 (GYPGVDCSLSGEFN) the chain is Extracellular. Residues 946 to 968 (VISKLVIIAMMIRGRHRGLPYTI) form a helical membrane-spanning segment. The Cytoplasmic segment spans residues 969–1059 (DRAIMLPNAA…RYVVRTVSEV (91 aa)).

Belongs to the TrkH potassium transport family.

The protein resides in the cell membrane. It catalyses the reaction K(+)(in) = K(+)(out). It carries out the reaction chloride(in) = chloride(out). Its activity is regulated as follows. TRK1-mediated chloride conductance is blocked by 4,4'-diisothiocyanatostilbene-2,2'-disulfonic acid. In terms of biological role, potassium transporter that mediates K(+) influx, as well as Cl(-) efflux as a secondary function. TRK1 is the major K(+) uptake transporter that regulates membrane potential and intracellular pH. The TRK1-mediated Cl(-) efflux should serve as a Cl(-) detoxification route and may play a role in sustaining C.albicans on mammalian epithelial surfaces, or in physiological saline solutions such as saliva. Mediates candidacidal activities of cysteine-free peptides, but not of defensins. The hallmark of salivary gland-secreted histatin-5 (Hst 5) killing of C.albicans is the rapid efflux of cellular ATP and other small nucleotides and ions from the cell as well as concurrent intracellular uptake of propidium iodide (PI). TRK1 is the channel for Hst 5-induced killing and histatin-5 may directly or indirectly alter TRK1 function, allowing the efflux of larger anions, including ATP, and the influx of small cationic dyes, such as PI. The protein is Potassium transporter TRK1 of Candida albicans (Yeast).